The following is a 157-amino-acid chain: 2-C-methyl-D-erythritol 2,4-cyclodiphosphate synthase (157 aa).

2 residues coordinate a divalent metal cation: aspartate 8 and histidine 10. 4-CDP-2-C-methyl-D-erythritol 2-phosphate-binding positions include 8–10 (DVH) and 34–35 (HS). Position 42 (histidine 42) interacts with a divalent metal cation. 4-CDP-2-C-methyl-D-erythritol 2-phosphate is bound by residues 56–58 (DIG), 61–65 (FPDTD), 100–106 (AQAPKMA), 132–135 (TTTE), phenylalanine 139, and arginine 142.

The protein belongs to the IspF family. Homotrimer. A divalent metal cation serves as cofactor.

The enzyme catalyses 4-CDP-2-C-methyl-D-erythritol 2-phosphate = 2-C-methyl-D-erythritol 2,4-cyclic diphosphate + CMP. It participates in isoprenoid biosynthesis; isopentenyl diphosphate biosynthesis via DXP pathway; isopentenyl diphosphate from 1-deoxy-D-xylulose 5-phosphate: step 4/6. Functionally, involved in the biosynthesis of isopentenyl diphosphate (IPP) and dimethylallyl diphosphate (DMAPP), two major building blocks of isoprenoid compounds. Catalyzes the conversion of 4-diphosphocytidyl-2-C-methyl-D-erythritol 2-phosphate (CDP-ME2P) to 2-C-methyl-D-erythritol 2,4-cyclodiphosphate (ME-CPP) with a corresponding release of cytidine 5-monophosphate (CMP). The chain is 2-C-methyl-D-erythritol 2,4-cyclodiphosphate synthase from Pseudomonas putida (strain ATCC 700007 / DSM 6899 / JCM 31910 / BCRC 17059 / LMG 24140 / F1).